The primary structure comprises 91 residues: Small ribosomal subunit protein uS19 (91 aa).

This sequence belongs to the universal ribosomal protein uS19 family.

In terms of biological role, protein S19 forms a complex with S13 that binds strongly to the 16S ribosomal RNA. This chain is Small ribosomal subunit protein uS19, found in Laribacter hongkongensis (strain HLHK9).